A 360-amino-acid polypeptide reads, in one-letter code: Outer mitochondrial transmembrane helix translocase (360 aa).

Residues 1–15 (MVHGEAFSRPLSRNE) are Mitochondrial intermembrane-facing. Residues 16–34 (VVGLIFRLTIFGAVTYFTI) traverse the membrane as a helical segment. Topologically, residues 35 to 360 (KWMVDAIDPT…QNVLMHVSLD (326 aa)) are cytoplasmic. 133 to 140 (GPPGCGKT) is a binding site for ATP.

It belongs to the AAA ATPase family. MSP1 subfamily.

Its subcellular location is the mitochondrion outer membrane. It localises to the peroxisome membrane. It is found in the postsynaptic cell membrane. It catalyses the reaction [protein]-with a C-terminal TM segment(out) + ATP + H2O = [protein]-with a C-terminal TM segment(in) + ADP + phosphate + H(+). Outer mitochondrial translocase required to remove mislocalized tail-anchored transmembrane proteins on mitochondria. Specifically recognizes and binds tail-anchored transmembrane proteins: acts as a dislocase that mediates the ATP-dependent extraction of mistargeted tail-anchored transmembrane proteins from the mitochondrion outer membrane. Also plays a critical role in regulating the surface expression of AMPA receptors (AMPAR), thereby regulating synaptic plasticity and learning and memory. The polypeptide is Outer mitochondrial transmembrane helix translocase (Xenopus tropicalis (Western clawed frog)).